The chain runs to 173 residues: Crossover junction endodeoxyribonuclease RuvC (173 aa).

Active-site residues include Asp-8, Glu-69, and Asp-141. The Mg(2+) site is built by Asp-8, Glu-69, and Asp-141.

It belongs to the RuvC family. Homodimer which binds Holliday junction (HJ) DNA. The HJ becomes 2-fold symmetrical on binding to RuvC with unstacked arms; it has a different conformation from HJ DNA in complex with RuvA. In the full resolvosome a probable DNA-RuvA(4)-RuvB(12)-RuvC(2) complex forms which resolves the HJ. The cofactor is Mg(2+).

The protein resides in the cytoplasm. The enzyme catalyses Endonucleolytic cleavage at a junction such as a reciprocal single-stranded crossover between two homologous DNA duplexes (Holliday junction).. In terms of biological role, the RuvA-RuvB-RuvC complex processes Holliday junction (HJ) DNA during genetic recombination and DNA repair. Endonuclease that resolves HJ intermediates. Cleaves cruciform DNA by making single-stranded nicks across the HJ at symmetrical positions within the homologous arms, yielding a 5'-phosphate and a 3'-hydroxyl group; requires a central core of homology in the junction. The consensus cleavage sequence is 5'-(A/T)TT(C/G)-3'. Cleavage occurs on the 3'-side of the TT dinucleotide at the point of strand exchange. HJ branch migration catalyzed by RuvA-RuvB allows RuvC to scan DNA until it finds its consensus sequence, where it cleaves and resolves the cruciform DNA. The polypeptide is Crossover junction endodeoxyribonuclease RuvC (Stenotrophomonas maltophilia (strain K279a)).